A 430-amino-acid polypeptide reads, in one-letter code: Adenylosuccinate synthetase (430 aa).

GTP contacts are provided by residues 12–18 (GDEGKGK) and 40–42 (GHT). The active-site Proton acceptor is the Asp13. Mg(2+)-binding residues include Asp13 and Gly40. Residues 13–16 (DEGK), 38–41 (NAGH), Thr128, Arg142, Gln223, Thr238, and Arg302 contribute to the IMP site. His41 acts as the Proton donor in catalysis. 298–304 (TTTGRPR) contacts substrate. Residues Arg304, 330–332 (SID), and 412–414 (SVG) contribute to the GTP site.

Belongs to the adenylosuccinate synthetase family. In terms of assembly, homodimer. Mg(2+) is required as a cofactor.

The protein localises to the cytoplasm. It carries out the reaction IMP + L-aspartate + GTP = N(6)-(1,2-dicarboxyethyl)-AMP + GDP + phosphate + 2 H(+). It functions in the pathway purine metabolism; AMP biosynthesis via de novo pathway; AMP from IMP: step 1/2. In terms of biological role, plays an important role in the de novo pathway of purine nucleotide biosynthesis. Catalyzes the first committed step in the biosynthesis of AMP from IMP. The sequence is that of Adenylosuccinate synthetase from Streptococcus suis (strain 98HAH33).